A 390-amino-acid polypeptide reads, in one-letter code: Na(+)/H(+) antiporter NhaA (390 aa).

The next 12 helical transmembrane spans lie at 14–34 (AAGGIVLIAAAALAMLLANLN), 61–81 (MLLWVNDALMAVFFLLVGLEV), 97–117 (SLPVIAALGGMVLPAALYLAF), 126–146 (AGWAIPAATDIAFALGILALL), 156–176 (VFLMALAIIDDLGAIVIIALF), 181–201 (LSMVSLMVAAGAIAVLAVLNL), 221–241 (VLKSGVHATLAGVIIGFFVPL), 256–276 (ALHPWVGFLILPLFAFANAGV), 280–300 (GVTLAGLASLLPLGIIAGLFI), 305–325 (GISLFCALAVKLKWATLPPGV), 330–350 (ILAVGVLCGIGFTMSIFIASL), and 362–382 (WAKLGILVGSLLAAVIGYALL).

This sequence belongs to the NhaA Na(+)/H(+) (TC 2.A.33) antiporter family.

The protein resides in the cell inner membrane. The enzyme catalyses Na(+)(in) + 2 H(+)(out) = Na(+)(out) + 2 H(+)(in). Its function is as follows. Na(+)/H(+) antiporter that extrudes sodium in exchange for external protons. The chain is Na(+)/H(+) antiporter NhaA from Cronobacter sakazakii (strain ATCC BAA-894) (Enterobacter sakazakii).